Consider the following 780-residue polypeptide: Tripartite terminase subunit 1 (780 aa).

Disordered stretches follow at residues 41 to 66 (RGNA…AGPG), 428 to 447 (GAGA…GDRV), and 452 to 483 (GARG…WGDI). The span at 52 to 63 (ASGAGAAASSEA) shows a compositional bias: low complexity. Residues 429–439 (AGAGGPKGGAG) are compositionally biased toward gly residues. Residue 691–698 (FASVYRCG) coordinates ATP.

It belongs to the herpesviridae TRM1 protein family. In terms of assembly, associates with TRM2 and TRM3 to form the tripartite terminase complex. Interacts with portal protein.

It localises to the host nucleus. Its function is as follows. Component of the molecular motor that translocates viral genomic DNA in empty capsid during DNA packaging. Forms a tripartite terminase complex together with TRM2 and TRM3 in the host cytoplasm. Once the complex reaches the host nucleus, it interacts with the capsid portal vertex. This portal forms a ring in which genomic DNA is translocated into the capsid. TRM1 carries an endonuclease activity that plays an important role for the cleavage of concatemeric viral DNA into unit length genomes. The chain is Tripartite terminase subunit 1 from Homo sapiens (Human).